A 68-amino-acid polypeptide reads, in one-letter code: Protein transport protein Sec61 subunit gamma (68 aa).

Residues 1–32 (MDQVMQFVEPSRQFVKDSIRLVKRCTKPDRKE) are Cytoplasmic-facing. A helical membrane pass occupies residues 33–61 (FQKIAMATAIGFAIMGFIGFFVKLIHIPI). The Extracellular segment spans residues 62–68 (NNIIVGS).

This sequence belongs to the SecE/SEC61-gamma family. In terms of assembly, the SEC61 channel-forming translocon complex consists of channel-forming core components SEC61A1, SEC61B and SEC61G and different auxiliary components such as SEC62 and SEC63. The SEC61 channel associates with the multi-pass translocon (MPT) complex.

It localises to the endoplasmic reticulum membrane. Functionally, component of SEC61 channel-forming translocon complex that mediates transport of signal peptide-containing precursor polypeptides across the endoplasmic reticulum (ER). Forms a ribosome receptor and a gated pore in the ER membrane, both functions required for cotranslational translocation of nascent polypeptides. The SEC61 channel is also involved in ER membrane insertion of transmembrane proteins: it mediates membrane insertion of the first few transmembrane segments of proteins, while insertion of subsequent transmembrane regions of multi-pass membrane proteins is mediated by the multi-pass translocon (MPT) complex. The sequence is that of Protein transport protein Sec61 subunit gamma (sec61g) from Xenopus laevis (African clawed frog).